The primary structure comprises 3011 residues: Chromodomain-helicase-DNA-binding protein 7 (3011 aa).

Disordered regions lie at residues 90 to 146 (ISNA…SMWG), 159 to 189 (PYQQQQQQPQPTQPPQAPSGPPGQGHPQHMQ), 202 to 422 (MQQH…GSAG), 502 to 806 (QQLP…VEKI), and 941 to 960 (PEMERVERPPADDWKKSESS). Low complexity predominate over residues 159-168 (PYQQQQQQPQ). The span at 169 to 179 (PTQPPQAPSGP) shows a compositional bias: pro residues. Positions 203–215 (QQHGQPQQQRMNQ) are enriched in low complexity. Composition is skewed to polar residues over residues 216 to 227 (FSQGQEGLNQGN), 241 to 258 (VPQQNPSMAPSLRHSVQQ), 291 to 347 (QTLN…NQSV), and 374 to 393 (GSLNQMNTQTMHPSQPQGTY). A compositionally biased stretch (low complexity) spans 502–516 (QQLPSQQQSFQQQMP). Polar residues-rich tracts occupy residues 576-586 (TQVSGPNTQLV) and 630-641 (DSQNLSRNSVDC). Composition is skewed to basic and acidic residues over residues 655–684 (KKEPKDPKEPKEKKEPKTPKVPKTPKEPKE) and 718–730 (KGKEGSENSDLDK). Over residues 747 to 759 (QKRRSSRQVKRKR) the composition is skewed to basic residues. Basic and acidic residues predominate over residues 760 to 770 (YTEDLEFKISD). Positions 783-795 (SPSNTSQSEQQES) are enriched in polar residues. Chromo domains are found at residues 801-868 (PVVE…GQNK) and 883-948 (VEID…RVER). The Helicase ATP-binding domain occupies 981–1155 (LFNWYNTRNC…FSLLHFLEPG (175 aa)). 994-1001 (DEMGLGKT) contributes to the ATP binding site. The DEAH box signature appears at 1106–1109 (DEAH). A Helicase C-terminal domain is found at 1295 to 1465 (LIDKLLPKLK…LSKKEIEDLL (171 aa)). Disordered stretches follow at residues 1577–1602 (FSDLESDSEEKPSTKPRRPQDKSQGY), 1836–1869 (GTDMLADGGDGGEFDREDEDPEYKPTRTPFKDEI), and 2136–2291 (GTGN…GFYM). Over residues 1585-1597 (EEKPSTKPRRPQD) the composition is skewed to basic and acidic residues. Over residues 1845–1856 (DGGEFDREDEDP) the composition is skewed to acidic residues. Positions 1857 to 1867 (EYKPTRTPFKD) are enriched in basic and acidic residues. Positions 2136–2145 (GTGNANTVSS) are enriched in polar residues. 2 stretches are compositionally biased toward basic and acidic residues: residues 2166–2207 (QEEK…KQDC) and 2218–2238 (CELKDIEMSTDVDPKSISEKG). Residues 2239–2253 (SEEDEEEKLDDDDKS) are compositionally biased toward acidic residues. The stretch at 2403–2433 (RRRRRKIEIEAERAAKRRNLMEMVAQLRESQ) forms a coiled coil. Serine 2561 is modified (phosphoserine). Disordered stretches follow at residues 2825 to 2900 (TTGN…LPTN) and 2946 to 3011 (GSNE…ENDE). Residues 2841–2851 (GASKAEEKKNE) show a composition bias toward basic and acidic residues. Residues 2864 to 2877 (DTVSATDSANGSVS) are compositionally biased toward polar residues. The segment covering 2878–2893 (AATAATTATATTTTTT) has biased composition (low complexity). Over residues 2948-2964 (NEEKATDKTEGTAFKDE) the composition is skewed to basic and acidic residues. Acidic residues-rich tracts occupy residues 2965 to 2974 (ENLEGSDAEE) and 2984 to 3011 (ILEDEIAQGEELDSLDGGEEIENNENDE).

Belongs to the SNF2/RAD54 helicase family. In terms of tissue distribution, expressed in the neural epithelium, otic placodes, optic placodes, branchial arches, and the olfactory placodes,.

It is found in the nucleus. It catalyses the reaction ATP + H2O = ADP + phosphate + H(+). In terms of biological role, ATP-dependent chromatin-remodeling factor, slides nucleosomes along DNA; nucleosome sliding requires ATP.Probable transcription regulator. Maybe involved in the in 45S precursor rRNA production. The polypeptide is Chromodomain-helicase-DNA-binding protein 7 (CHD7) (Gallus gallus (Chicken)).